A 571-amino-acid chain; its full sequence is Proline--tRNA ligase (571 aa).

This sequence belongs to the class-II aminoacyl-tRNA synthetase family. ProS type 1 subfamily. As to quaternary structure, homodimer.

The protein localises to the cytoplasm. The catalysed reaction is tRNA(Pro) + L-proline + ATP = L-prolyl-tRNA(Pro) + AMP + diphosphate. Its function is as follows. Catalyzes the attachment of proline to tRNA(Pro) in a two-step reaction: proline is first activated by ATP to form Pro-AMP and then transferred to the acceptor end of tRNA(Pro). As ProRS can inadvertently accommodate and process non-cognate amino acids such as alanine and cysteine, to avoid such errors it has two additional distinct editing activities against alanine. One activity is designated as 'pretransfer' editing and involves the tRNA(Pro)-independent hydrolysis of activated Ala-AMP. The other activity is designated 'posttransfer' editing and involves deacylation of mischarged Ala-tRNA(Pro). The misacylated Cys-tRNA(Pro) is not edited by ProRS. This chain is Proline--tRNA ligase, found in Pseudomonas putida (strain ATCC 47054 / DSM 6125 / CFBP 8728 / NCIMB 11950 / KT2440).